Reading from the N-terminus, the 774-residue chain is 5-methyltetrahydropteroyltriglutamate--homocysteine methyltransferase (774 aa).

Residues 24–27 (RELK) and K120 each bind 5-methyltetrahydropteroyltri-L-glutamate. Residues 446–448 (IGS) and E499 each bind L-homocysteine. L-methionine contacts are provided by residues 446-448 (IGS) and E499. 5-methyltetrahydropteroyltri-L-glutamate is bound at residue W576. D614 provides a ligand contact to L-homocysteine. D614 provides a ligand contact to L-methionine. 5-methyltetrahydropteroyltri-L-glutamate is bound at residue E620. Residues H656, C658, and E680 each contribute to the Zn(2+) site. H709 acts as the Proton donor in catalysis. C741 provides a ligand contact to Zn(2+).

It belongs to the vitamin-B12 independent methionine synthase family. Zn(2+) serves as cofactor.

The catalysed reaction is 5-methyltetrahydropteroyltri-L-glutamate + L-homocysteine = tetrahydropteroyltri-L-glutamate + L-methionine. Its pathway is amino-acid biosynthesis; L-methionine biosynthesis via de novo pathway; L-methionine from L-homocysteine (MetE route): step 1/1. In terms of biological role, catalyzes the transfer of a methyl group from 5-methyltetrahydrofolate to homocysteine resulting in methionine formation. The sequence is that of 5-methyltetrahydropteroyltriglutamate--homocysteine methyltransferase from Streptomyces griseus subsp. griseus (strain JCM 4626 / CBS 651.72 / NBRC 13350 / KCC S-0626 / ISP 5235).